The sequence spans 168 residues: Disulfide bond formation protein B 1 (168 aa).

Residues Met1–Phe14 are Cytoplasmic-facing. Residues Leu15–Tyr31 traverse the membrane as a helical segment. The Periplasmic portion of the chain corresponds to Met32–Tyr49. A disulfide bridge links Cys41 with Cys44. The helical transmembrane segment at Ala50–Pro65 threads the bilayer. The Cytoplasmic portion of the chain corresponds to Gly66–Phe72. The helical transmembrane segment at Phe73–Gly89 threads the bilayer. Over Asn90–Gln144 the chain is Periplasmic. A disulfide bond links Cys102 and Cys130. Residues Trp145–Arg163 form a helical membrane-spanning segment. The Cytoplasmic segment spans residues Asn164–Gly168.

The protein belongs to the DsbB family.

The protein resides in the cell inner membrane. Functionally, required for disulfide bond formation in some periplasmic proteins. Acts by oxidizing the DsbA protein. The chain is Disulfide bond formation protein B 1 from Pseudomonas entomophila (strain L48).